We begin with the raw amino-acid sequence, 119 residues long: Fluoride-specific ion channel FluC (119 aa).

4 helical membrane passes run 5-25 (ILPL…LNLA), 30-50 (LSPA…IGIF), 59-79 (WKLL…GFSL), and 92-112 (SALA…WLGL). Na(+)-binding residues include Gly69 and Thr72.

This sequence belongs to the fluoride channel Fluc/FEX (TC 1.A.43) family.

It is found in the cell inner membrane. The catalysed reaction is fluoride(in) = fluoride(out). With respect to regulation, na(+) is not transported, but it plays an essential structural role and its presence is essential for fluoride channel function. Functionally, fluoride-specific ion channel. Important for reducing fluoride concentration in the cell, thus reducing its toxicity. The sequence is that of Fluoride-specific ion channel FluC from Neisseria gonorrhoeae (strain NCCP11945).